A 518-amino-acid chain; its full sequence is GMP synthase [glutamine-hydrolyzing] (518 aa).

A Glutamine amidotransferase type-1 domain is found at 13-203; sequence KIIVLDFGSQ…ALNVCGCKGD (191 aa). Residue Cys90 is the Nucleophile of the active site. Residues His177 and Glu179 contribute to the active site. Residues 204–393 form the GMPS ATP-PPase domain; the sequence is WTMENFSEVE…LGMPDAIVWR (190 aa). 231-237 lines the ATP pocket; that stretch reads SGGVDSS.

As to quaternary structure, homodimer.

The enzyme catalyses XMP + L-glutamine + ATP + H2O = GMP + L-glutamate + AMP + diphosphate + 2 H(+). Its pathway is purine metabolism; GMP biosynthesis; GMP from XMP (L-Gln route): step 1/1. Catalyzes the synthesis of GMP from XMP. This is GMP synthase [glutamine-hydrolyzing] from Listeria monocytogenes serovar 1/2a (strain ATCC BAA-679 / EGD-e).